Consider the following 193-residue polypeptide: Acyl carrier protein phosphodiesterase (193 aa).

This sequence belongs to the AcpH family.

The enzyme catalyses holo-[ACP] + H2O = apo-[ACP] + (R)-4'-phosphopantetheine + H(+). Functionally, converts holo-ACP to apo-ACP by hydrolytic cleavage of the phosphopantetheine prosthetic group from ACP. This is Acyl carrier protein phosphodiesterase from Yersinia pestis.